A 123-amino-acid chain; its full sequence is CD59 glycoprotein (123 aa).

The N-terminal stretch at 1–25 is a signal peptide; sequence MGSKGGFILLWLLSILAVLCHLGHS. The region spanning 26–103 is the UPAR/Ly6 domain; it reads LQCYNCINPA…LCNKSDATIS (78 aa). 5 cysteine pairs are disulfide-bonded: cysteine 28/cysteine 51, cysteine 31/cysteine 38, cysteine 44/cysteine 65, cysteine 71/cysteine 89, and cysteine 90/cysteine 95. Residue asparagine 43 is glycosylated (N-linked (GlcNAc...) asparagine). A lipid anchor (GPI-anchor amidated serine) is attached at serine 98. Positions 99–123 are cleaved as a propeptide — removed in mature form; sequence DATISSGKTALLVILLLVATWHFCL.

In terms of assembly, interacts with T-cell surface antigen CD2. N- and O-glycosylated. As to expression, expressed in all tissues tested (lung, testis liver, kidney, spleen, heart and skeletal muscle). Highest levels in lung and spleen, lowest levels in liver and skeletal muscle.

It is found in the cell membrane. Its subcellular location is the secreted. Its function is as follows. Potent inhibitor of the complement membrane attack complex (MAC) action, which protects self-cells from damage during complement activation. Acts by binding to the beta-haipins of C8 (C8A and C8B) components of the assembling MAC, forming an intermolecular beta-sheet that prevents incorporation of the multiple copies of C9 required for complete formation of the osmolytic pore. The chain is CD59 glycoprotein from Sus scrofa (Pig).